The primary structure comprises 331 residues: Inositol 2-dehydrogenase (331 aa).

The protein belongs to the Gfo/Idh/MocA family. As to quaternary structure, homotetramer.

The enzyme catalyses myo-inositol + NAD(+) = scyllo-inosose + NADH + H(+). Functionally, involved in the oxidation of myo-inositol (MI) to 2-keto-myo-inositol (2KMI or 2-inosose). The sequence is that of Inositol 2-dehydrogenase from Renibacterium salmoninarum (strain ATCC 33209 / DSM 20767 / JCM 11484 / NBRC 15589 / NCIMB 2235).